The primary structure comprises 138 residues: Glutathione S-transferase Mu 5 (138 aa).

Ser1 carries the post-translational modification Phosphoserine. In terms of domain architecture, GST N-terminal spans 1–71; that stretch reads SMVLGYWDIR…KITQSNAILR (71 aa). Residues 6–7, 39–43, 52–53, and 65–66 contribute to the glutathione site; these read YW, WLDVK, NL, and QS. A GST C-terminal domain is found at 72–135; that stretch reads IRVDIMENQI…FMCRCFKMPI (64 aa).

The protein belongs to the GST superfamily. Mu family. Homodimer.

It localises to the cytoplasm. The enzyme catalyses RX + glutathione = an S-substituted glutathione + a halide anion + H(+). Its function is as follows. Conjugation of reduced glutathione to a wide number of exogenous and endogenous hydrophobic electrophiles. The protein is Glutathione S-transferase Mu 5 of Mesocricetus auratus (Golden hamster).